Reading from the N-terminus, the 255-residue chain is MMHVKHIALGSRLLPLSFACNPSEVVHVVGPNGSGKSTLLGAISGTLTQREGVSGQVLVDSNDLLTMPLSEQAHIRGYLCQQSRPTFNVDVFQYLALSLPTGANISDAKVRDAVNIVIELVQLQDKLHRSIQTLSGGEWQRVRLAGVCLQVWRTINPYSQLLILDEPAAPLDIAQEGLLYQLINAVAAQGIGVLVANHDLNRTLRYADKVLLLNNGVLHSLGHADEVLTEEGLAEVFQTQVRKVVLEDRPYLIFD.

The ABC transporter domain maps to 2–240; the sequence is MHVKHIALGS…EGLAEVFQTQ (239 aa). Residue 30–37 coordinates ATP; it reads GPNGSGKS.

It belongs to the ABC transporter superfamily. Vitamin B12 importer (TC 3.A.1.13.1) family. In terms of assembly, the complex is composed of two ATP-binding proteins (BtuD), two transmembrane proteins (BtuC) and a solute-binding protein (BtuF).

It localises to the cell inner membrane. It catalyses the reaction an R-cob(III)alamin(out) + ATP + H2O = an R-cob(III)alamin(in) + ADP + phosphate + H(+). Functionally, part of the ABC transporter complex BtuCDF involved in vitamin B12 import. Responsible for energy coupling to the transport system. This chain is Vitamin B12 import ATP-binding protein BtuD, found in Vibrio campbellii (strain ATCC BAA-1116).